A 190-amino-acid chain; its full sequence is Segregation and condensation protein B (190 aa).

This sequence belongs to the ScpB family. Homodimer. Homodimerization may be required to stabilize the binding of ScpA to the Smc head domains. Component of a cohesin-like complex composed of ScpA, ScpB and the Smc homodimer, in which ScpA and ScpB bind to the head domain of Smc. The presence of the three proteins is required for the association of the complex with DNA.

Its subcellular location is the cytoplasm. Its function is as follows. Participates in chromosomal partition during cell division. May act via the formation of a condensin-like complex containing Smc and ScpA that pull DNA away from mid-cell into both cell halves. The chain is Segregation and condensation protein B from Bacillus cereus (strain ATCC 10987 / NRS 248).